The following is a 559-amino-acid chain: Membrane protein insertase YidC (559 aa).

Helical transmembrane passes span I5 to F25, A332 to F352, Y355 to F375, L429 to I449, L474 to L494, and F520 to W540.

The protein belongs to the OXA1/ALB3/YidC family. Type 1 subfamily. As to quaternary structure, interacts with the Sec translocase complex via SecD. Specifically interacts with transmembrane segments of nascent integral membrane proteins during membrane integration.

It is found in the cell inner membrane. Required for the insertion and/or proper folding and/or complex formation of integral membrane proteins into the membrane. Involved in integration of membrane proteins that insert both dependently and independently of the Sec translocase complex, as well as at least some lipoproteins. Aids folding of multispanning membrane proteins. The protein is Membrane protein insertase YidC of Rickettsia bellii (strain OSU 85-389).